Reading from the N-terminus, the 255-residue chain is Ribosomal RNA small subunit methyltransferase G 2 (255 aa).

S-adenosyl-L-methionine-binding residues include glycine 90, phenylalanine 95, and arginine 155. Acidic residues predominate over residues 233–245 (EDEGEELLMDELS). The segment at 233 to 255 (EDEGEELLMDELSNEEKRRWAKY) is disordered. Basic and acidic residues predominate over residues 246–255 (NEEKRRWAKY).

The protein belongs to the methyltransferase superfamily. RNA methyltransferase RsmG family.

Its subcellular location is the cytoplasm. The enzyme catalyses guanosine(527) in 16S rRNA + S-adenosyl-L-methionine = N(7)-methylguanosine(527) in 16S rRNA + S-adenosyl-L-homocysteine. Its function is as follows. Specifically methylates the N7 position of guanine in position 527 of 16S rRNA. In Bdellovibrio bacteriovorus (strain ATCC 15356 / DSM 50701 / NCIMB 9529 / HD100), this protein is Ribosomal RNA small subunit methyltransferase G 2.